We begin with the raw amino-acid sequence, 319 residues long: tRNA-cytidine(32) 2-sulfurtransferase (319 aa).

Residues Ser49–Ser54 carry the PP-loop motif motif. Residues Cys124, Cys127, and Cys215 each coordinate [4Fe-4S] cluster.

Belongs to the TtcA family. Homodimer. Requires Mg(2+) as cofactor. It depends on [4Fe-4S] cluster as a cofactor.

The protein localises to the cytoplasm. It catalyses the reaction cytidine(32) in tRNA + S-sulfanyl-L-cysteinyl-[cysteine desulfurase] + AH2 + ATP = 2-thiocytidine(32) in tRNA + L-cysteinyl-[cysteine desulfurase] + A + AMP + diphosphate + H(+). It participates in tRNA modification. Functionally, catalyzes the ATP-dependent 2-thiolation of cytidine in position 32 of tRNA, to form 2-thiocytidine (s(2)C32). The sulfur atoms are provided by the cysteine/cysteine desulfurase (IscS) system. The chain is tRNA-cytidine(32) 2-sulfurtransferase from Shewanella amazonensis (strain ATCC BAA-1098 / SB2B).